The chain runs to 506 residues: Putative basic amino acid antiporter YfcC (506 aa).

13 consecutive transmembrane segments (helical) span residues leucine 19–glycine 39, glycine 107–methionine 127, isoleucine 148–glycine 168, alanine 171–threonine 191, tryptophan 208–glycine 228, leucine 231–alanine 251, tryptophan 287–asparagine 307, phenylalanine 310–valine 330, methionine 352–asparagine 372, alanine 398–glycine 418, serine 419–asparagine 439, valine 442–alanine 462, and leucine 485–tyrosine 505.

This sequence to H.influenzae HI_0594. The protein to B.subtilis YcgA.

The protein resides in the cell inner membrane. Metabolomic profiling of different yfcC over-expression and deletion strains suggests that it may affect the glyoxylate shunt. The chain is Putative basic amino acid antiporter YfcC (yfcC) from Escherichia coli (strain K12).